The chain runs to 216 residues: Adenylate kinase (216 aa).

10–15 is an ATP binding site; sequence GAGKGT. Residues 30–59 are NMP; sequence STGDMFRAAMKAETEMGLQAKSFIDKGALV. Residues threonine 31, arginine 36, 57–59, 85–88, and glutamine 92 contribute to the AMP site; these read ALV and GFPR. Residues 126-163 form an LID region; sequence GRRICKECGATYHLEFNPPAKADVCDKCGGELYQRSDD. Arginine 127 contacts ATP. Zn(2+)-binding residues include cysteine 130 and cysteine 133. 136–137 contributes to the ATP binding site; the sequence is TY. Zn(2+)-binding residues include cysteine 150 and cysteine 153. Residues arginine 160 and arginine 171 each coordinate AMP. Glutamine 199 contacts ATP.

Belongs to the adenylate kinase family. In terms of assembly, monomer.

It is found in the cytoplasm. The enzyme catalyses AMP + ATP = 2 ADP. The protein operates within purine metabolism; AMP biosynthesis via salvage pathway; AMP from ADP: step 1/1. Catalyzes the reversible transfer of the terminal phosphate group between ATP and AMP. Plays an important role in cellular energy homeostasis and in adenine nucleotide metabolism. The protein is Adenylate kinase of Bacillus cereus (strain G9842).